Consider the following 313-residue polypeptide: BTB/POZ domain-containing adapter for CUL3-mediated RhoA degradation protein 3 (313 aa).

The residue at position 1 (methionine 1) is an N-acetylmethionine. The residue at position 23 (serine 23) is a Phosphoserine. In terms of domain architecture, BTB spans 32 to 100 (KYVKLNVGGA…LRDGAVPLPE (69 aa)). Positions 239–245 (QTKVEFP) match the PCNA-binding motif.

Belongs to the BACURD family. In terms of assembly, homotetramer; forms a two-fold symmetric tetramer in solution. Interacts with CUL3; interaction is direct and forms a 5:5 heterodecamer. Component of the BCR(BACURD3) E3 ubiquitin ligase complex, at least composed of CUL3, KCTD10/BACURD3 and RBX1. Interacts with DNA polymerase delta subunit 2/POLD2. Interacts with PCNA.

It is found in the nucleus. It participates in protein modification; protein ubiquitination. Substrate-specific adapter of a BCR (BTB-CUL3-RBX1) E3 ubiquitin-protein ligase complex. The BCR(BACURD3) E3 ubiquitin ligase complex mediates the ubiquitination of target proteins, leading to their degradation by the proteasome. This is BTB/POZ domain-containing adapter for CUL3-mediated RhoA degradation protein 3 (KCTD10) from Homo sapiens (Human).